Consider the following 141-residue polypeptide: HTH-type transcriptional repressor NsrR (141 aa).

The HTH rrf2-type domain maps to 2 to 129 (QLTSFTDYGL…DNYTLADLVE (128 aa)). A DNA-binding region (H-T-H motif) is located at residues 28–51 (ISEVTDVYGVSRNHMVKIINQLSR). Residues cysteine 91, cysteine 96, and cysteine 102 each coordinate [2Fe-2S] cluster.

[2Fe-2S] cluster serves as cofactor.

In terms of biological role, nitric oxide-sensitive repressor of genes involved in protecting the cell against nitrosative stress. May require iron for activity. The sequence is that of HTH-type transcriptional repressor NsrR from Escherichia coli O157:H7 (strain EC4115 / EHEC).